The chain runs to 146 residues: Large-conductance mechanosensitive channel (146 aa).

The next 2 helical transmembrane spans lie at 12–32 (AFAMKGNVVDMAVGVIIGGAF) and 88–108 (LQATFDFLIIAFSIFLFIKLI).

Belongs to the MscL family. As to quaternary structure, homopentamer.

The protein resides in the cell inner membrane. Functionally, channel that opens in response to stretch forces in the membrane lipid bilayer. May participate in the regulation of osmotic pressure changes within the cell. The chain is Large-conductance mechanosensitive channel from Bacteroides fragilis (strain ATCC 25285 / DSM 2151 / CCUG 4856 / JCM 11019 / LMG 10263 / NCTC 9343 / Onslow / VPI 2553 / EN-2).